A 1207-amino-acid chain; its full sequence is DNA-directed RNA polymerase subunit beta' (1207 aa).

The Zn(2+) site is built by cysteine 60, cysteine 62, cysteine 75, and cysteine 78. Mg(2+) contacts are provided by aspartate 450, aspartate 452, and aspartate 454. Residues cysteine 819, cysteine 893, cysteine 900, and cysteine 903 each contribute to the Zn(2+) site.

The protein belongs to the RNA polymerase beta' chain family. As to quaternary structure, the RNAP catalytic core consists of 2 alpha, 1 beta, 1 beta' and 1 omega subunit. When a sigma factor is associated with the core the holoenzyme is formed, which can initiate transcription. Mg(2+) serves as cofactor. The cofactor is Zn(2+).

The catalysed reaction is RNA(n) + a ribonucleoside 5'-triphosphate = RNA(n+1) + diphosphate. In terms of biological role, DNA-dependent RNA polymerase catalyzes the transcription of DNA into RNA using the four ribonucleoside triphosphates as substrates. This chain is DNA-directed RNA polymerase subunit beta', found in Streptococcus pyogenes serotype M3 (strain ATCC BAA-595 / MGAS315).